Consider the following 198-residue polypeptide: Probable chorismate pyruvate-lyase (198 aa).

Substrate contacts are provided by arginine 73, leucine 111, and glutamate 172.

The protein belongs to the UbiC family.

The protein resides in the cytoplasm. The catalysed reaction is chorismate = 4-hydroxybenzoate + pyruvate. Its pathway is cofactor biosynthesis; ubiquinone biosynthesis. Functionally, removes the pyruvyl group from chorismate, with concomitant aromatization of the ring, to provide 4-hydroxybenzoate (4HB) for the ubiquinone pathway. The chain is Probable chorismate pyruvate-lyase from Burkholderia lata (strain ATCC 17760 / DSM 23089 / LMG 22485 / NCIMB 9086 / R18194 / 383).